Reading from the N-terminus, the 100-residue chain is Small ribosomal subunit protein uS14c (100 aa).

The protein belongs to the universal ribosomal protein uS14 family. As to quaternary structure, part of the 30S ribosomal subunit.

The protein localises to the plastid. The protein resides in the chloroplast. Its function is as follows. Binds 16S rRNA, required for the assembly of 30S particles. The polypeptide is Small ribosomal subunit protein uS14c (Tupiella akineta (Green alga)).